We begin with the raw amino-acid sequence, 233 residues long: Orotidine 5'-phosphate decarboxylase (233 aa).

Substrate is bound by residues Asp11, Lys34, 61–70 (DLKLHDIPNT), Thr117, Arg179, Gln188, Gly208, and Arg209. Lys63 serves as the catalytic Proton donor.

It belongs to the OMP decarboxylase family. Type 1 subfamily. Homodimer.

The enzyme catalyses orotidine 5'-phosphate + H(+) = UMP + CO2. The protein operates within pyrimidine metabolism; UMP biosynthesis via de novo pathway; UMP from orotate: step 2/2. In terms of biological role, catalyzes the decarboxylation of orotidine 5'-monophosphate (OMP) to uridine 5'-monophosphate (UMP). This is Orotidine 5'-phosphate decarboxylase from Streptococcus pneumoniae (strain CGSP14).